Here is a 185-residue protein sequence, read N- to C-terminus: Ribosome-recycling factor (185 aa).

Belongs to the RRF family.

The protein localises to the cytoplasm. Responsible for the release of ribosomes from messenger RNA at the termination of protein biosynthesis. May increase the efficiency of translation by recycling ribosomes from one round of translation to another. In Vibrio cholerae serotype O1 (strain ATCC 39541 / Classical Ogawa 395 / O395), this protein is Ribosome-recycling factor.